We begin with the raw amino-acid sequence, 66 residues long: Large ribosomal subunit protein bL32 (66 aa).

Positions 1 to 19 (MAVPKRKMSRSNTRARRSQ) are enriched in basic residues. Residues 1 to 20 (MAVPKRKMSRSNTRARRSQW) are disordered.

It belongs to the bacterial ribosomal protein bL32 family.

The protein is Large ribosomal subunit protein bL32 of Beutenbergia cavernae (strain ATCC BAA-8 / DSM 12333 / CCUG 43141 / JCM 11478 / NBRC 16432 / NCIMB 13614 / HKI 0122).